The chain runs to 529 residues: Isoleucine--tRNA ligase (529 aa).

An L-isoleucyl-5'-AMP-binding site is contributed by glutamate 482. Positions 523 to 527 match the 'KMSKS' region motif; sequence KMSKS. Lysine 526 serves as a coordination point for ATP.

It belongs to the class-I aminoacyl-tRNA synthetase family. IleS type 1 subfamily. As to quaternary structure, monomer.

It is found in the cytoplasm. It catalyses the reaction tRNA(Ile) + L-isoleucine + ATP = L-isoleucyl-tRNA(Ile) + AMP + diphosphate. Its function is as follows. Catalyzes the attachment of isoleucine to tRNA(Ile). As IleRS can inadvertently accommodate and process structurally similar amino acids such as valine, to avoid such errors it has two additional distinct tRNA(Ile)-dependent editing activities. One activity is designated as 'pretransfer' editing and involves the hydrolysis of activated Val-AMP. The other activity is designated 'posttransfer' editing and involves deacylation of mischarged Val-tRNA(Ile). This Aquifex pyrophilus protein is Isoleucine--tRNA ligase (ileS).